A 510-amino-acid chain; its full sequence is Glycerol kinase (510 aa).

Threonine 14 is a binding site for ADP. Residues threonine 14 and threonine 15 each contribute to the ATP site. Residue threonine 14 participates in sn-glycerol 3-phosphate binding. Arginine 18 is a binding site for ADP. Arginine 84, glutamate 85, tyrosine 136, and aspartate 256 together coordinate sn-glycerol 3-phosphate. 5 residues coordinate glycerol: arginine 84, glutamate 85, tyrosine 136, aspartate 256, and glutamine 257. Residues threonine 278, glycine 322, glycine 422, and asparagine 426 each coordinate ADP. Residues threonine 278, glycine 322, and glycine 422 each coordinate ATP.

It belongs to the FGGY kinase family.

It carries out the reaction glycerol + ATP = sn-glycerol 3-phosphate + ADP + H(+). It functions in the pathway polyol metabolism; glycerol degradation via glycerol kinase pathway; sn-glycerol 3-phosphate from glycerol: step 1/1. In terms of biological role, key enzyme in the regulation of glycerol uptake and metabolism. Catalyzes the phosphorylation of glycerol to yield sn-glycerol 3-phosphate. It also catalyzes the phosphorylation of dihydroxyacetone (DHA). Involved, together with the DHA kinase DhaKLM, in the metabolism of DHA. This chain is Glycerol kinase, found in Haloferax volcanii (strain ATCC 29605 / DSM 3757 / JCM 8879 / NBRC 14742 / NCIMB 2012 / VKM B-1768 / DS2) (Halobacterium volcanii).